The primary structure comprises 546 residues: Chaperonin GroEL 2 (546 aa).

Residues 30–33 (TLGP), Lys-51, 87–91 (DGTTT), Gly-415, 479–481 (NAA), and Asp-495 each bind ATP. Residues 524–546 (APKDAPPAAPAGVPGAGGPGFDF) are disordered. The span at 537 to 546 (PGAGGPGFDF) shows a compositional bias: gly residues.

The protein belongs to the chaperonin (HSP60) family. In terms of assembly, forms a cylinder of 14 subunits composed of two heptameric rings stacked back-to-back. Interacts with the co-chaperonin GroES.

It localises to the cytoplasm. The catalysed reaction is ATP + H2O + a folded polypeptide = ADP + phosphate + an unfolded polypeptide.. Its function is as follows. Together with its co-chaperonin GroES, plays an essential role in assisting protein folding. The GroEL-GroES system forms a nano-cage that allows encapsulation of the non-native substrate proteins and provides a physical environment optimized to promote and accelerate protein folding. The chain is Chaperonin GroEL 2 from Burkholderia pseudomallei (strain 1710b).